We begin with the raw amino-acid sequence, 2146 residues long: Conidial pigment polyketide synthase alb1 (2146 aa).

The tract at residues 8–244 (YLFGDQTISC…KAPGVSGPYH (237 aa)) is N-terminal acylcarrier protein transacylase domain (SAT). Residues 375 to 806 (RSKIAIIGMS…GGNTALLMED (432 aa)) form the Ketosynthase family 3 (KS3) domain. Residues cysteine 547, histidine 682, and histidine 724 each act as for beta-ketoacyl synthase activity in the active site. A malonyl-CoA:ACP transacylase (MAT) domain region spans residues 911-1232 (GFVFTGQGAQ…LSTLHLAGVE (322 aa)). Serine 1001 serves as the catalytic For acyl/malonyl transferase activity. Residues 1290–1602 (TTAAQKIVEC…ARKILDTVLP (313 aa)) form a product template (PT) domain region. An N-terminal hotdog fold region spans residues 1294-1427 (QKIVECREDG…VKLFNCAERE (134 aa)). The PKS/mFAS DH domain occupies 1294-1598 (QKIVECREDG…FQALARKILD (305 aa)). Histidine 1326 acts as the Proton acceptor; for dehydratase activity in catalysis. Residues 1453-1598 (AHRMQRGMVY…FQALARKILD (146 aa)) form a C-terminal hotdog fold region. Aspartate 1511 (proton donor; for dehydratase activity) is an active-site residue. The disordered stretch occupies residues 1611–1644 (GAPAPAPARPIGEKKAPPPIKVTGPPKPNPSNAR). Pro residues predominate over residues 1627-1639 (PPPIKVTGPPKPN). The Carrier 1 domain maps to 1647 to 1721 (SPVVARALEI…DFKAYLAEKG (75 aa)). Position 1681 is an O-(pantetheine 4'-phosphoryl)serine (serine 1681). Positions 1724–1769 (DSSSPEPSSEPESKFSFNSDASSEASSGLTTPGITSPVKHEAPKGG) are disordered. Positions 1738–1750 (FSFNSDASSEASS) are enriched in low complexity. In terms of domain architecture, Carrier 2 spans 1768-1845 (GGQNKVWKSI…AVQAALDLKP (78 aa)). An O-(pantetheine 4'-phosphoryl)serine modification is found at serine 1805. The segment at 1892-2019 (KLFMFPDGSG…SIGLFGDGKR (128 aa)) is claisen cyclase domain. Serine 1962 acts as the For Claisen cyclase activity in catalysis.

The protein localises to the endosome. It carries out the reaction 6 malonyl-CoA + acetyl-CoA + 6 H(+) = naphtopyrone YWA1 + 6 CO2 + 7 CoA + H2O. It participates in pigment biosynthesis; melanin biosynthesis. Functionally, non-reducing polyketide synthase; part of the gene cluster that mediates the biosynthesis of dihydroxynaphthalene (DHN)-melanin, a bluish-green pigment and a structural component of the conidial wall. The first step of the pathway is the production of the heptaketide naphtopyrone YWA1 by the polyketide synthase alb1 though condensation of acetyl-CoA with malonyl-CoA. The naphtopyrone YWA1 is then converted to the pentaketide 1,3,6,8-tetrahydroxynaphthalene (1,3,6,8-THN) by the heptaketide hydrolyase ayg1 though chain-length shortening. 1,3,6,8-THN is substrate of the hydroxynaphthalene reductase arp2 to yield scytalone. The scytalone dehydratase arp1 then reduces scytalone to 1,3,8-THN. 1,3,8-THN is also substrate of the hydroxynaphthalene reductase arp2 to yield vermelone. Vermelone is further converted by the multicopper oxidase abr1 to 1,8-DHN. Finally the laccase abr2 transforms 1,8-DHN to DHN-melanin. DHN-melanin biosynthesis appears to be initiated in endosomes where early enzymes (abl1, ayg1, arp1 and arp2) localize, with exocytosis leading to melanin deposition on the cell surface where late enzymes (abr1 and abr2) localize. DHN-melanin is an important structural component of the outer cell wall and is required for the presence of conidial surface hydrophobins. DHN-melanin also plays a crucial role in fungal virulence, including a protective role against the host's immune defenses. DHN-melanin protects also conidia against amoeba predation. This Aspergillus fumigatus (strain ATCC MYA-4609 / CBS 101355 / FGSC A1100 / Af293) (Neosartorya fumigata) protein is Conidial pigment polyketide synthase alb1.